Consider the following 280-residue polypeptide: 4-diphosphocytidyl-2-C-methyl-D-erythritol kinase (280 aa).

Lys-11 is a catalytic residue. 95–105 provides a ligand contact to ATP; it reads PVAAGLGGGSS. Residue Asp-137 is part of the active site.

The protein belongs to the GHMP kinase family. IspE subfamily.

It carries out the reaction 4-CDP-2-C-methyl-D-erythritol + ATP = 4-CDP-2-C-methyl-D-erythritol 2-phosphate + ADP + H(+). The protein operates within isoprenoid biosynthesis; isopentenyl diphosphate biosynthesis via DXP pathway; isopentenyl diphosphate from 1-deoxy-D-xylulose 5-phosphate: step 3/6. Catalyzes the phosphorylation of the position 2 hydroxy group of 4-diphosphocytidyl-2C-methyl-D-erythritol. This Pelobacter propionicus (strain DSM 2379 / NBRC 103807 / OttBd1) protein is 4-diphosphocytidyl-2-C-methyl-D-erythritol kinase.